The following is a 311-amino-acid chain: tRNA-cytidine(32) 2-sulfurtransferase (311 aa).

Positions 47–52 (SGGKDS) match the PP-loop motif motif. Residues cysteine 122, cysteine 125, and cysteine 213 each contribute to the [4Fe-4S] cluster site.

This sequence belongs to the TtcA family. In terms of assembly, homodimer. Mg(2+) is required as a cofactor. Requires [4Fe-4S] cluster as cofactor.

The protein localises to the cytoplasm. It catalyses the reaction cytidine(32) in tRNA + S-sulfanyl-L-cysteinyl-[cysteine desulfurase] + AH2 + ATP = 2-thiocytidine(32) in tRNA + L-cysteinyl-[cysteine desulfurase] + A + AMP + diphosphate + H(+). It functions in the pathway tRNA modification. In terms of biological role, catalyzes the ATP-dependent 2-thiolation of cytidine in position 32 of tRNA, to form 2-thiocytidine (s(2)C32). The sulfur atoms are provided by the cysteine/cysteine desulfurase (IscS) system. This chain is tRNA-cytidine(32) 2-sulfurtransferase, found in Salmonella paratyphi B (strain ATCC BAA-1250 / SPB7).